The primary structure comprises 565 residues: Proline--tRNA ligase (565 aa).

It belongs to the class-II aminoacyl-tRNA synthetase family. ProS type 1 subfamily. Homodimer.

The protein resides in the cytoplasm. The enzyme catalyses tRNA(Pro) + L-proline + ATP = L-prolyl-tRNA(Pro) + AMP + diphosphate. In terms of biological role, catalyzes the attachment of proline to tRNA(Pro) in a two-step reaction: proline is first activated by ATP to form Pro-AMP and then transferred to the acceptor end of tRNA(Pro). As ProRS can inadvertently accommodate and process non-cognate amino acids such as alanine and cysteine, to avoid such errors it has two additional distinct editing activities against alanine. One activity is designated as 'pretransfer' editing and involves the tRNA(Pro)-independent hydrolysis of activated Ala-AMP. The other activity is designated 'posttransfer' editing and involves deacylation of mischarged Ala-tRNA(Pro). The misacylated Cys-tRNA(Pro) is not edited by ProRS. The chain is Proline--tRNA ligase from Bacillus pumilus (strain SAFR-032).